A 201-amino-acid polypeptide reads, in one-letter code: 3-isopropylmalate dehydratase small subunit (201 aa).

This sequence belongs to the LeuD family. LeuD type 1 subfamily. Heterodimer of LeuC and LeuD.

It carries out the reaction (2R,3S)-3-isopropylmalate = (2S)-2-isopropylmalate. Its pathway is amino-acid biosynthesis; L-leucine biosynthesis; L-leucine from 3-methyl-2-oxobutanoate: step 2/4. Functionally, catalyzes the isomerization between 2-isopropylmalate and 3-isopropylmalate, via the formation of 2-isopropylmaleate. The sequence is that of 3-isopropylmalate dehydratase small subunit from Escherichia fergusonii (strain ATCC 35469 / DSM 13698 / CCUG 18766 / IAM 14443 / JCM 21226 / LMG 7866 / NBRC 102419 / NCTC 12128 / CDC 0568-73).